A 443-amino-acid chain; its full sequence is tRNA modification GTPase MnmE (443 aa).

Residues Arg-23, Glu-81, and Lys-119 each contribute to the (6S)-5-formyl-5,6,7,8-tetrahydrofolate site. The TrmE-type G domain occupies 214–369 (GMRVAILGKP…LLSALKERAI (156 aa)). GTP-binding positions include 224-229 (NVGKST), 243-249 (SEYPGTT), and 268-271 (DTAG). 2 residues coordinate Mg(2+): Ser-228 and Thr-249. Residue Lys-443 participates in (6S)-5-formyl-5,6,7,8-tetrahydrofolate binding.

The protein belongs to the TRAFAC class TrmE-Era-EngA-EngB-Septin-like GTPase superfamily. TrmE GTPase family. As to quaternary structure, homodimer. Heterotetramer of two MnmE and two MnmG subunits. K(+) serves as cofactor.

The protein localises to the cytoplasm. In terms of biological role, exhibits a very high intrinsic GTPase hydrolysis rate. Involved in the addition of a carboxymethylaminomethyl (cmnm) group at the wobble position (U34) of certain tRNAs, forming tRNA-cmnm(5)s(2)U34. The polypeptide is tRNA modification GTPase MnmE (Anaplasma marginale (strain St. Maries)).